The following is a 138-amino-acid chain: Putative nickel-responsive regulator (138 aa).

4 residues coordinate Ni(2+): His80, His91, His93, and Cys99.

Belongs to the transcriptional regulatory CopG/NikR family. Requires Ni(2+) as cofactor.

Functionally, transcriptional regulator. This Campylobacter hominis (strain ATCC BAA-381 / DSM 21671 / CCUG 45161 / LMG 19568 / NCTC 13146 / CH001A) protein is Putative nickel-responsive regulator.